The following is a 414-amino-acid chain: tRNA (guanine-N(7)-)-methyltransferase non-catalytic subunit WDR4 (414 aa).

Position 2 is an N-acetylalanine (alanine 2). WD repeat units follow at residues 60–99 (QGSDTVLASTFSKSGSYFVLTDDSKRLILFRTNPWQCLSV), 101–140 (TVVRRCTALTFTASEEKILVADKSGDVYSFSVLEPHGGGR), 144–184 (GHLS…IESF), and 187–227 (GHTE…ELHC). A disordered region spans residues 377-414 (EERLQQQLEKKRRQAPPPGPNGPTKKMRAGELAQGCSS).

Belongs to the WD repeat TRM82 family. As to quaternary structure, non-catalytic component of the METTL1-WDR4 complex, composed of METTL1 and WDR4. Interacts with FEN1; the interaction is direct.

It localises to the nucleus. The protein localises to the chromosome. Its pathway is tRNA modification; N(7)-methylguanine-tRNA biosynthesis. Non-catalytic component of the METTL1-WDR4 methyltransferase complex required for the formation of N(7)-methylguanine in a subset of RNA species, such as tRNAs, mRNAs and microRNAs (miRNAs). In the METTL1-WDR4 methyltransferase complex, WDR4 acts as a scaffold for tRNA-binding. Required for the formation of N(7)-methylguanine at position 46 (m7G46) in a large subset of tRNAs that contain the 5'-RAGGU-3' motif within the variable loop. M7G46 interacts with C13-G22 in the D-loop to stabilize tRNA tertiary structure and protect tRNAs from decay. Also required for the formation of N(7)-methylguanine at internal sites in a subset of mRNAs. Also required for methylation of a specific subset of miRNAs, such as let-7. Independently of METTL1, also plays a role in genome stability: localizes at the DNA replication site and regulates endonucleolytic activities of FEN1. The polypeptide is tRNA (guanine-N(7)-)-methyltransferase non-catalytic subunit WDR4 (Bos taurus (Bovine)).